The primary structure comprises 283 residues: 1-deoxypentalenic acid 11-beta-hydroxylase (283 aa).

Arg117 contacts substrate. Fe cation contacts are provided by His135 and Asp137. 2-oxoglutarate is bound by residues 135-137 (HQD) and Trp151. Residue Arg186 coordinates substrate. His224 is a binding site for Fe cation. Positions 226 and 238 each coordinate 2-oxoglutarate. The interval 251-283 (HRGFNALTPWPESAKDASKGIMSKITGTPTTAE) is disordered.

This sequence belongs to the PhyH family. Fe cation serves as cofactor. It depends on L-ascorbate as a cofactor.

It catalyses the reaction 1-deoxypentalenate + 2-oxoglutarate + O2 = 1-deoxy-11beta-hydroxypentalenate + succinate + CO2. The protein operates within antibiotic biosynthesis; pentalenolactone biosynthesis. Catalyzes the conversion of 1-deoxypentalenic acid to 11-beta-hydroxy-1-deoxypentalenic acid in the biosynthesis of pentalenolactone antibiotic. The protein is 1-deoxypentalenic acid 11-beta-hydroxylase (pntH) of Streptomyces arenae.